A 61-amino-acid polypeptide reads, in one-letter code: Large ribosomal subunit protein bL32 (61 aa).

A disordered region spans residues 1–20 (MAVQKSKPSRAKRGKRRSHD). Over residues 7–19 (KPSRAKRGKRRSH) the composition is skewed to basic residues.

It belongs to the bacterial ribosomal protein bL32 family.

The protein is Large ribosomal subunit protein bL32 of Buchnera aphidicola subsp. Cinara cedri (strain Cc).